The primary structure comprises 872 residues: MKSSAIRQSFLDFFASKGHTVVPSSSLVPGNDPTLLFTNAGMVQFKDVFTGQDTRPYSRAVSSQRCVRAGGKHNDLENVGYTARHHTFFEMLGNFSFGDYFKQDAIKYAWEYLTTVLKLPSEKLWVTVYAEDDEAYDIWHNDVGVPKARIVRIGDNKGARYASDNFWAMGDTGPCGPCTEIFYDHGPDVAGGPPGSPDEDGDRYIEIWNNVFMQFNRDEAGTMHPLPKPSVDTGMGLERISAVMQHVHSNYEIDLFQALIAAAARETNTHDLGNNSLKVIADHIRACSFLIVDGVIPGNEGRGYVLRRIIRRAIRHGYKLGARAAFFHRIVPDLGIAMGEAYPELVKAQTRVMDILRQEEERFFETIEHGMGILESELKKLVAGGVFDGELAFKLHDTYGFPLDLTADICREAGVAVDTAAFDAAMARQKAQARGAGKFKLGAGLDYAGEATTFHGYDTLAREASVLALYKDGSAVGELKEGDSGVVVLDHTPFYAESGGQVGDRGTLQSKQGAFEVEDTLKIQAQVFGHHGVVKTGSLAVGDSVLARVDETARARTMRNHSVTHLMHKALREVLGEHVQQKGSLVDSEKTRFDFVQPSPMTAAQIREVEARVNAEILVNTPTQARVMGIEDAQKTGAMMLFGEKYGDEVRVLDIGSSRELCGGTHVARTGDIGLFKIVSESGVAAGVRRVEAITGDNALAYLQAREQEIQQAAAALKAHPAELGAKLAQTLDHVRALEKDLERLKSKLAASAGDELVAQAADINGVKVLAARLDGIDAKGLRETADKLRDKLKSCALVLGTVADGKVSLIAAVTPDVTAKIKAGELVNVVAAQVGGKGGGKPDLAMAGGTDPGALPAALASVEAWVQSRLS.

Zn(2+) is bound by residues His-561, His-565, Cys-662, and His-666.

The protein belongs to the class-II aminoacyl-tRNA synthetase family. It depends on Zn(2+) as a cofactor.

The protein localises to the cytoplasm. It catalyses the reaction tRNA(Ala) + L-alanine + ATP = L-alanyl-tRNA(Ala) + AMP + diphosphate. Catalyzes the attachment of alanine to tRNA(Ala) in a two-step reaction: alanine is first activated by ATP to form Ala-AMP and then transferred to the acceptor end of tRNA(Ala). Also edits incorrectly charged Ser-tRNA(Ala) and Gly-tRNA(Ala) via its editing domain. The sequence is that of Alanine--tRNA ligase from Thiobacillus denitrificans (strain ATCC 25259 / T1).